We begin with the raw amino-acid sequence, 74 residues long: Protein SlyX homolog (74 aa).

The segment at 54–74 is disordered; that stretch reads QDRNPDAQEPYSLRDEIPPHY.

Belongs to the SlyX family.

The chain is Protein SlyX homolog from Neisseria gonorrhoeae (strain ATCC 700825 / FA 1090).